A 243-amino-acid chain; its full sequence is 2-O-methyltransferase NoeI (243 aa).

Belongs to the FkbM methyltransferase family.

Its subcellular location is the cytoplasm. Required for 2-O-methylation of the fucosyl group of Nod factors. The chain is 2-O-methyltransferase NoeI (noeI) from Sinorhizobium fredii (strain NBRC 101917 / NGR234).